We begin with the raw amino-acid sequence, 363 residues long: Serpentine receptor class T-55 (363 aa).

Residues 1 to 18 (MKLRHFLIFLMLIPISSS) form the signal peptide. The next 7 membrane-spanning stretches (helical) occupy residues 70–90 (IYYI…IWVF), 107–127 (VFIG…PGFV), 143–163 (IVGK…AFLG), 187–207 (WLTV…TVLF), 231–251 (FLYF…ACLC), 278–298 (ICIS…FVLP), and 303–323 (FFHV…IMYI).

It belongs to the nematode receptor-like protein srt family.

The protein resides in the membrane. This chain is Serpentine receptor class T-55 (srt-55), found in Caenorhabditis elegans.